The following is a 210-amino-acid chain: uncharacterized protein (210 aa).

The signal sequence occupies residues M1–A21.

This is an uncharacterized protein from Archaeoglobus fulgidus (strain ATCC 49558 / DSM 4304 / JCM 9628 / NBRC 100126 / VC-16).